The chain runs to 667 residues: Fermitin family homolog 3 (667 aa).

Serine 8 carries the phosphoserine modification. Tyrosine 11 bears the Phosphotyrosine mark. The FERM domain occupies 229 to 558 (WLDSSRCLMQ…SLPDFGISYV (330 aa)). The 104-residue stretch at 354–457 (DHLRIFRIPR…WMAGCRLASK (104 aa)) folds into the PH domain. Position 504 is a phosphotyrosine (tyrosine 504). Threonine 591 carries the phosphothreonine modification.

Belongs to the kindlin family. As to quaternary structure, interacts with ITGB1, ITGB2 and ITGB3 (via cytoplasmic tails). As to expression, highly expressed in lymph node. Expressed in thymus, spleen and leukocytes. Weakly expressed in placenta, small intestine, stomach, testis and lung. Overexpressed in B-cell malignancies.

It is found in the cell projection. Its subcellular location is the podosome. Functionally, plays a central role in cell adhesion in hematopoietic cells. Acts by activating the integrin beta-1-3 (ITGB1, ITGB2 and ITGB3). Required for integrin-mediated platelet adhesion and leukocyte adhesion to endothelial cells. Required for activation of integrin beta-2 (ITGB2) in polymorphonuclear granulocytes (PMNs). Isoform 2 may act as a repressor of NF-kappa-B and apoptosis. In Homo sapiens (Human), this protein is Fermitin family homolog 3 (FERMT3).